Here is a 339-residue protein sequence, read N- to C-terminus: RNA 3'-terminal phosphate cyclase (339 aa).

Residues Asp109 and 286–290 each bind ATP; that span reads HLADQ. The Tele-AMP-histidine intermediate role is filled by His310.

This sequence belongs to the RNA 3'-terminal cyclase family. Type 1 subfamily.

It is found in the cytoplasm. The catalysed reaction is a 3'-end 3'-phospho-ribonucleotide-RNA + ATP = a 3'-end 2',3'-cyclophospho-ribonucleotide-RNA + AMP + diphosphate. Functionally, catalyzes the conversion of 3'-phosphate to a 2',3'-cyclic phosphodiester at the end of RNA. The mechanism of action of the enzyme occurs in 3 steps: (A) adenylation of the enzyme by ATP; (B) transfer of adenylate to an RNA-N3'P to produce RNA-N3'PP5'A; (C) and attack of the adjacent 2'-hydroxyl on the 3'-phosphorus in the diester linkage to produce the cyclic end product. The biological role of this enzyme is unknown but it is likely to function in some aspects of cellular RNA processing. The sequence is that of RNA 3'-terminal phosphate cyclase from Halobacterium salinarum (strain ATCC 29341 / DSM 671 / R1).